The sequence spans 145 residues: 6-pyruvoyl tetrahydrobiopterin synthase (145 aa).

Serine 19 is subject to Phosphoserine. A Zn(2+)-binding site is contributed by histidine 24. A Phosphoserine modification is found at serine 28. The active-site Proton acceptor is cysteine 43. Positions 49 and 51 each coordinate Zn(2+). Catalysis depends on histidine 90, which acts as the Charge relay system. Tyrosine 128 bears the Phosphotyrosine mark. The Charge relay system role is filled by glutamate 134.

Belongs to the PTPS family. Homohexamer formed of two homotrimers in a head to head fashion. Zn(2+) serves as cofactor. In terms of processing, phosphorylation of Ser-19 is required for maximal enzyme activity.

It carries out the reaction 7,8-dihydroneopterin 3'-triphosphate = 6-pyruvoyl-5,6,7,8-tetrahydropterin + triphosphate + H(+). Its pathway is cofactor biosynthesis; tetrahydrobiopterin biosynthesis; tetrahydrobiopterin from 7,8-dihydroneopterin triphosphate: step 1/3. Functionally, involved in the biosynthesis of tetrahydrobiopterin, an essential cofactor of aromatic amino acid hydroxylases. Catalyzes the transformation of 7,8-dihydroneopterin triphosphate into 6-pyruvoyl tetrahydropterin. This Pongo abelii (Sumatran orangutan) protein is 6-pyruvoyl tetrahydrobiopterin synthase (PTS).